Reading from the N-terminus, the 108-residue chain is Small ribosomal subunit protein uS17 (108 aa).

Belongs to the universal ribosomal protein uS17 family. Part of the 30S ribosomal subunit.

Functionally, one of the primary rRNA binding proteins, it binds specifically to the 5'-end of 16S ribosomal RNA. The protein is Small ribosomal subunit protein uS17 of Methanoregula boonei (strain DSM 21154 / JCM 14090 / 6A8).